Consider the following 192-residue polypeptide: Elongation factor P (192 aa).

It belongs to the elongation factor P family.

It localises to the cytoplasm. Its pathway is protein biosynthesis; polypeptide chain elongation. In terms of biological role, involved in peptide bond synthesis. Stimulates efficient translation and peptide-bond synthesis on native or reconstituted 70S ribosomes in vitro. Probably functions indirectly by altering the affinity of the ribosome for aminoacyl-tRNA, thus increasing their reactivity as acceptors for peptidyl transferase. The chain is Elongation factor P from Borrelia hermsii (strain HS1 / DAH).